The chain runs to 460 residues: MKKLAKMISVATLGACAFQAHALDGKLVPDQGILVSVGQDVDSVNDYSSAMGTTPAGVTNYVGIVNLDGLSTDADAGAGRNNIVELANQYPTSALIVGVSMNGEVQNVANGQYNANIDTLIRTLGEFDRPVYLRWAYEVDGPWNGHNTEDLKQSFRHVYQRIRELGYADNISMVWQVASYCPTAPGQLGTWWPGDDVVDWVGLSYFAPQDCNWDRVNEAAQWARSHNKPLFINESSPQRYQLADLTYSTDPAKGTNRQAKTDQQIWSEWFEPFFQFMVDNQDILKGFTYINADWDSQWRWAAPYNEGYWGDSRVQVIPYIKQKWQETLSDPKFIRHSDELFAQLGYGNSDGGNGGDNGGDNGGDNGGETPENCTDDFNFNYVSDNEIEVYHVDKGWSAGWNYLCLDDYCLSGTKSNGAFSRSFSAQLGQTYKMTFKVEDITGQGQQIIDKTVTFTNQVCN.

The first 22 residues, 1-22, serve as a signal peptide directing secretion; that stretch reads MKKLAKMISVATLGACAFQAHA. The GH26 domain maps to 23–337; the sequence is LDGKLVPDQG…LSDPKFIRHS (315 aa). E138 acts as the Proton donor in catalysis. The active-site Nucleophile is E234. The interval 347-371 is disordered; the sequence is GNSDGGNGGDNGGDNGGDNGGETPE. The segment covering 348 to 366 has biased composition (gly residues); the sequence is NSDGGNGGDNGGDNGGDNG. The carbohydrate binding module (CBM) stretch occupies residues 368–460; sequence ETPENCTDDF…TVTFTNQVCN (93 aa). Disulfide bonds link C373-C459 and C404-C409.

It belongs to the glycosyl hydrolase 26 family.

The catalysed reaction is Random hydrolysis of (1-&gt;3)-beta-D-glycosidic linkages in (1-&gt;3)-beta-D-xylans.. Its activity is regulated as follows. Completely inhibited by Cu(2+), Hg(2+) and N-bromosuccinimide. Strongly inhibited by Ag(+), Zn(2+) and Pb(2+). Moderately inhibited by Fe(3+), Al(3+), Mn(2+), dithiothreitol and p-chloromercuribenzoic acid. Slightly activated by Mg(2+) and Ca(2+). Unaffected by Na(+), K(+), Ba(2+), EDTA, iodoacetic acid and N-ethylmalaimide. Catalyzes the hydrolysis of beta-1,3-xylan into oligosaccharides, mainly xylotriose and xylobiose with smaller amounts of xylotetraose, xylose, xylopentaose and xylohexaose. Weakly active toward beta-1,3-xylotriose, yielding xylose and xylobiose. Converts beta-1,3-xylotetraose into xylotriose, xylobiose and xylose. Converts beta-1,3-xylopentaose into xylotetraose, xylotriose, xylobiose and xylose. Does not hydrolyze xylobiose, p-nitrophenyl-beta-xyloside, beta-1,4-xylan, curdlan or carboxymethylcellulose. This Vibrio sp protein is Beta-1,3-xylanase TXYA.